Reading from the N-terminus, the 476-residue chain is RNA-binding protein 45 (476 aa).

Positions 1 to 20 (MDEAGSSASGGGFRPGVDSL) are disordered. RRM domains follow at residues 26–106 (SRIF…IAQS) and 121–195 (TRIF…PKNK). Lys-34 is covalently cross-linked (Glycyl lysine isopeptide (Lys-Gly) (interchain with G-Cter in SUMO2)). A phosphoserine mark is found at Ser-199 and Ser-464. One can recognise an RRM 3 domain in the interval 392 to 464 (ERLFIVFNPH…VRLKVMLADS (73 aa)).

It is found in the cytoplasm. The protein localises to the nucleus. In terms of biological role, RNA-binding protein with binding specificity for poly(C). May play an important role in neural development. The chain is RNA-binding protein 45 (RBM45) from Homo sapiens (Human).